The following is a 672-amino-acid chain: DNA ligase (672 aa).

Residues Asp-32–Asp-36, Ser-81–Leu-82, and Glu-113 contribute to the NAD(+) site. Lys-115 functions as the N6-AMP-lysine intermediate in the catalytic mechanism. Residues Arg-136, Glu-173, Lys-290, and Lys-314 each contribute to the NAD(+) site. Positions 408, 411, 426, and 432 each coordinate Zn(2+). One can recognise a BRCT domain in the interval Glu-592–Ser-672.

It belongs to the NAD-dependent DNA ligase family. LigA subfamily. It depends on Mg(2+) as a cofactor. Mn(2+) is required as a cofactor.

The enzyme catalyses NAD(+) + (deoxyribonucleotide)n-3'-hydroxyl + 5'-phospho-(deoxyribonucleotide)m = (deoxyribonucleotide)n+m + AMP + beta-nicotinamide D-nucleotide.. DNA ligase that catalyzes the formation of phosphodiester linkages between 5'-phosphoryl and 3'-hydroxyl groups in double-stranded DNA using NAD as a coenzyme and as the energy source for the reaction. It is essential for DNA replication and repair of damaged DNA. The protein is DNA ligase of Yersinia enterocolitica serotype O:8 / biotype 1B (strain NCTC 13174 / 8081).